A 235-amino-acid chain; its full sequence is Uridylate kinase (235 aa).

Residue 9–12 coordinates ATP; that stretch reads KLSG. Glycine 51 serves as a coordination point for UMP. Positions 52 and 56 each coordinate ATP. UMP-binding positions include aspartate 71 and 133–140; that span reads SGNPFFTT. Residues threonine 160, tyrosine 166, and aspartate 169 each coordinate ATP.

It belongs to the UMP kinase family. As to quaternary structure, homohexamer.

The protein resides in the cytoplasm. It catalyses the reaction UMP + ATP = UDP + ADP. It participates in pyrimidine metabolism; CTP biosynthesis via de novo pathway; UDP from UMP (UMPK route): step 1/1. Its activity is regulated as follows. Inhibited by UTP. Catalyzes the reversible phosphorylation of UMP to UDP. The protein is Uridylate kinase of Gloeobacter violaceus (strain ATCC 29082 / PCC 7421).